The primary structure comprises 162 residues: NADH-quinone oxidoreductase subunit C (162 aa).

The protein belongs to the complex I 30 kDa subunit family. As to quaternary structure, NDH-1 is composed of 14 different subunits. Subunits NuoB, C, D, E, F, and G constitute the peripheral sector of the complex.

It is found in the cell inner membrane. The catalysed reaction is a quinone + NADH + 5 H(+)(in) = a quinol + NAD(+) + 4 H(+)(out). In terms of biological role, NDH-1 shuttles electrons from NADH, via FMN and iron-sulfur (Fe-S) centers, to quinones in the respiratory chain. The immediate electron acceptor for the enzyme in this species is believed to be ubiquinone. Couples the redox reaction to proton translocation (for every two electrons transferred, four hydrogen ions are translocated across the cytoplasmic membrane), and thus conserves the redox energy in a proton gradient. The chain is NADH-quinone oxidoreductase subunit C from Trichlorobacter lovleyi (strain ATCC BAA-1151 / DSM 17278 / SZ) (Geobacter lovleyi).